We begin with the raw amino-acid sequence, 159 residues long: UPF0201 protein MK0399 (159 aa).

This sequence belongs to the UPF0201 family.

The sequence is that of UPF0201 protein MK0399 from Methanopyrus kandleri (strain AV19 / DSM 6324 / JCM 9639 / NBRC 100938).